A 158-amino-acid polypeptide reads, in one-letter code: Troponin C, isoform 1 (158 aa).

N-acetylserine is present on serine 1. EF-hand domains are found at residues 15 to 50 (EQIV…MGIK), 51 to 86 (VSST…FLIE), 91 to 126 (AMMK…LDAR), and 127 to 158 (LTAE…MMTG). Aspartate 64, aspartate 66, serine 68, glutamine 70, and glutamate 75 together coordinate Ca(2+). Ca(2+) contacts are provided by aspartate 140, aspartate 142, serine 144, threonine 146, and glutamate 151.

The protein belongs to the troponin C family.

Functionally, troponin is the central regulatory protein of striated muscle contraction. Tn consists of three components: Tn-I which is the inhibitor of actomyosin ATPase, Tn-T which contains the binding site for tropomyosin and Tn-C. The binding of calcium to Tn-C abolishes the inhibitory action of Tn on actin filaments. In Balanus nubilus (Giant acorn barnacle), this protein is Troponin C, isoform 1.